We begin with the raw amino-acid sequence, 281 residues long: MTDVMRDVASLRMLQGMWRRAGETVGLVPTMGALHDGHMALARAAREECGKVIATIFVNPTQFGPTEDLDAYPNTFDSDLHMLREVGVDVVFAPTRDVMYPAGFGTTVKVAGLTAPLCGAARPGHFDGVTQVVAKLLNLGQADRAYFGQKDWQQLAVVRQMVRDLNFPTEIVGIPTVRAEDGLALSSRNAYLTEAEREIAPILYRTIRDAAARVAAGHGATGVCEAAARGLLGKGFTRIDYLECRDATTLAPAETPDPGTARIFVAAQLGGARLIDNVSVG.

Residue 31–38 (MGALHDGH) coordinates ATP. The active-site Proton donor is His-38. A (R)-pantoate-binding site is contributed by Gln-62. Gln-62 lines the beta-alanine pocket. 148–151 (GQKD) contacts ATP. Gln-154 is a (R)-pantoate binding site. ATP-binding positions include Val-177 and 185-188 (LSSR).

Belongs to the pantothenate synthetase family. In terms of assembly, homodimer.

The protein localises to the cytoplasm. It carries out the reaction (R)-pantoate + beta-alanine + ATP = (R)-pantothenate + AMP + diphosphate + H(+). The protein operates within cofactor biosynthesis; (R)-pantothenate biosynthesis; (R)-pantothenate from (R)-pantoate and beta-alanine: step 1/1. Functionally, catalyzes the condensation of pantoate with beta-alanine in an ATP-dependent reaction via a pantoyl-adenylate intermediate. This chain is Pantothenate synthetase, found in Dinoroseobacter shibae (strain DSM 16493 / NCIMB 14021 / DFL 12).